The following is a 468-amino-acid chain: Probable Xaa-Pro aminopeptidase PEPP (468 aa).

Mn(2+) contacts are provided by Asp-264, Asp-275, Glu-398, and Glu-438.

It belongs to the peptidase M24B family. Requires Mn(2+) as cofactor.

It catalyses the reaction Release of any N-terminal amino acid, including proline, that is linked to proline, even from a dipeptide or tripeptide.. Functionally, catalyzes the removal of a penultimate prolyl residue from the N-termini of peptides. This Paracoccidioides brasiliensis (strain Pb18) protein is Probable Xaa-Pro aminopeptidase PEPP (PEPP).